Consider the following 245-residue polypeptide: Ribonuclease PH (245 aa).

Residues Arg-86 and 124–126 each bind phosphate; that span reads GTR.

It belongs to the RNase PH family. As to quaternary structure, homohexameric ring arranged as a trimer of dimers.

The catalysed reaction is tRNA(n+1) + phosphate = tRNA(n) + a ribonucleoside 5'-diphosphate. Functionally, phosphorolytic 3'-5' exoribonuclease that plays an important role in tRNA 3'-end maturation. Removes nucleotide residues following the 3'-CCA terminus of tRNAs; can also add nucleotides to the ends of RNA molecules by using nucleoside diphosphates as substrates, but this may not be physiologically important. Probably plays a role in initiation of 16S rRNA degradation (leading to ribosome degradation) during starvation. The polypeptide is Ribonuclease PH (Bacillus cereus (strain G9842)).